The primary structure comprises 1071 residues: SLIT-ROBO Rho GTPase-activating protein 2 (1071 aa).

In terms of domain architecture, F-BAR spans 22 to 325 (KEIRAQLTEQ…AVENLDATSD (304 aa)). The segment covering 181–203 (LKEAEKQEEKQIGKSVKQEDRQT) has biased composition (basic and acidic residues). Positions 181-211 (LKEAEKQEEKQIGKSVKQEDRQTPRSPDSTA) are disordered. At serine 206 the chain carries Phosphoserine. Residues 363–401 (QSELVQRRQQLQSRLSTLKIENEEVKKTMEATLQTIQDI) adopt a coiled-coil conformation. Serine 427, serine 500, serine 691, serine 695, and serine 724 each carry phosphoserine. The region spanning 489-679 (ARRSSTVRKQ…TIIIQHENIF (191 aa)) is the Rho-GAP domain. A disordered region spans residues 703–726 (THGETISAEDSTQDVTAEHHTSDD). In terms of domain architecture, SH3 spans 728 to 787 (CEPIEAIAKFDYVGRTARELSFKKGASLLLYQRASDDWWEGRHNGIDGLIPHQYIVVQDT). Disordered regions lie at residues 794-820 (RSSP…GASC) and 835-936 (NKQR…NHRP). Serine 795 is subject to Phosphoserine. 3 stretches are compositionally biased toward polar residues: residues 857 to 867 (LGSSLTDSSSP), 874 to 885 (RPSSQPIMSQNL), and 897 to 907 (GHGSLNSISRH). Serine 916 is subject to Phosphoserine. Residues 919–933 (IRKTATAGRSKSFNN) are compositionally biased toward polar residues. Arginine 927 bears the Symmetric dimethylarginine; by PRMT5 mark. Serine 930 bears the Phosphoserine mark. Residues 940 to 968 (EVIAQDIEATMNSALNELQELERQSSAKH) adopt a coiled-coil conformation. The tract at residues 983-1012 (SPVVAPTSEPSSPLHTQLLKDPEPAFQRSA) is disordered. Serine 990, serine 994, serine 1013, and serine 1027 each carry phosphoserine. The disordered stretch occupies residues 1029 to 1071 (KMAAPVKPPATRPKPTVFPKTNATSPGVNSSASPQSTDKSCTV). The segment covering 1047–1071 (PKTNATSPGVNSSASPQSTDKSCTV) has biased composition (polar residues).

In terms of assembly, homodimer. Forms a heterooligomer with SRGAP1 and SRGAP3 through its F-BAR domain. Interacts (via SH3 domain) with GPHN. Interacts (via SH3 domain) with FMNL1 (activated by RAC1); regulates the actin filament severing activity of FMNL1 and actin dynamics. Interacts (via SH3 domain) with FMNL3. Interacts with RAC1; specifically stimulates RAC1 GTPase activity. Interacts (via F-BAR domain) with HOMER1. Interacts with ROBO1 and ROBO2. Interacts with FASLG. Interacts with PRMT5. In terms of processing, methylation at Arg-927 is required for the stimulation of cell migration, dimerization and localization at the plasma membrane protrusions.

The protein localises to the cell membrane. Its subcellular location is the cell projection. It localises to the dendritic spine. It is found in the postsynaptic density. The protein resides in the postsynaptic cell membrane. The protein localises to the lamellipodium. Its subcellular location is the cytoplasmic vesicle. It localises to the phagosome. It is found in the nucleus. The protein resides in the cytoplasm. The protein localises to the cytosol. Functionally, postsynaptic RAC1 GTPase activating protein (GAP) that plays a key role in neuronal morphogenesis and migration mainly during development of the cerebral cortex. Regulates excitatory and inhibitory synapse maturation and density in cortical pyramidal neurons. SRGAP2/SRGAP2A limits excitatory and inhibitory synapse density through its RAC1-specific GTPase activating activity, while it promotes maturation of both excitatory and inhibitory synapses through its ability to bind to the postsynaptic scaffolding protein HOMER1 at excitatory synapses, and the postsynaptic protein GPHN at inhibitory synapses. Mechanistically, acts by binding and deforming membranes, thereby regulating actin dynamics to regulate cell migration and differentiation. Promotes cell repulsion and contact inhibition of locomotion: localizes to protrusions with curved edges and controls the duration of RAC1 activity in contact protrusions. In non-neuronal cells, may also play a role in cell migration by regulating the formation of lamellipodia and filopodia. The chain is SLIT-ROBO Rho GTPase-activating protein 2 from Rattus norvegicus (Rat).